The following is a 183-amino-acid chain: Probable chorismate pyruvate-lyase (183 aa).

Positions 79, 115, and 168 each coordinate substrate.

The protein belongs to the UbiC family.

It is found in the cytoplasm. It carries out the reaction chorismate = 4-hydroxybenzoate + pyruvate. It functions in the pathway cofactor biosynthesis; ubiquinone biosynthesis. In terms of biological role, removes the pyruvyl group from chorismate, with concomitant aromatization of the ring, to provide 4-hydroxybenzoate (4HB) for the ubiquinone pathway. In Chromohalobacter salexigens (strain ATCC BAA-138 / DSM 3043 / CIP 106854 / NCIMB 13768 / 1H11), this protein is Probable chorismate pyruvate-lyase.